The primary structure comprises 644 residues: Core protein VP4 (644 aa).

This sequence belongs to the orbivirus VP4 family.

Its subcellular location is the virion. In terms of biological role, the VP4 protein is one of the five proteins (with VP1, VP3, VP6 and VP7) which form the inner capsid of the virus. The polypeptide is Core protein VP4 (Segment-4) (Bluetongue virus 11 (isolate USA) (BTV 11)).